The following is a 118-amino-acid chain: Large ribosomal subunit protein bL19 (118 aa).

It belongs to the bacterial ribosomal protein bL19 family.

Functionally, this protein is located at the 30S-50S ribosomal subunit interface and may play a role in the structure and function of the aminoacyl-tRNA binding site. The sequence is that of Large ribosomal subunit protein bL19 from Hahella chejuensis (strain KCTC 2396).